Here is a 1204-residue protein sequence, read N- to C-terminus: ATP-dependent helicase/nuclease subunit A (1204 aa).

The UvrD-like helicase ATP-binding domain maps to 2-469 (TNFTKEQDQA…IILADNFRST (468 aa)). 23-30 (ASAGSGKT) lines the ATP pocket. The UvrD-like helicase C-terminal domain maps to 497–784 (GQLQFGASYY…KLMTIHASKG (288 aa)).

It belongs to the helicase family. AddA subfamily. Heterodimer of AddA and AddB/RexB. Mg(2+) serves as cofactor.

It catalyses the reaction Couples ATP hydrolysis with the unwinding of duplex DNA by translocating in the 3'-5' direction.. The catalysed reaction is ATP + H2O = ADP + phosphate + H(+). The heterodimer acts as both an ATP-dependent DNA helicase and an ATP-dependent, dual-direction single-stranded exonuclease. Recognizes the chi site generating a DNA molecule suitable for the initiation of homologous recombination. The AddA nuclease domain is required for chi fragment generation; this subunit has the helicase and 3' -&gt; 5' nuclease activities. This Lactobacillus gasseri (strain ATCC 33323 / DSM 20243 / BCRC 14619 / CIP 102991 / JCM 1131 / KCTC 3163 / NCIMB 11718 / NCTC 13722 / AM63) protein is ATP-dependent helicase/nuclease subunit A.